Here is a 403-residue protein sequence, read N- to C-terminus: S-adenosylmethionine synthase (403 aa).

Histidine 17 lines the ATP pocket. Aspartate 19 contributes to the Mg(2+) binding site. Glutamate 45 provides a ligand contact to K(+). The L-methionine site is built by glutamate 58 and glutamine 104. The flexible loop stretch occupies residues glutamine 104–threonine 114. Residues aspartate 179–lysine 181, lysine 250–phenylalanine 251, aspartate 259, arginine 265–lysine 266, alanine 282, and lysine 286 each bind ATP. Residue aspartate 259 coordinates L-methionine. Lysine 290 provides a ligand contact to L-methionine.

Belongs to the AdoMet synthase family. Homotetramer; dimer of dimers. The cofactor is Mg(2+). K(+) is required as a cofactor.

Its subcellular location is the cytoplasm. It catalyses the reaction L-methionine + ATP + H2O = S-adenosyl-L-methionine + phosphate + diphosphate. The protein operates within amino-acid biosynthesis; S-adenosyl-L-methionine biosynthesis; S-adenosyl-L-methionine from L-methionine: step 1/1. Functionally, catalyzes the formation of S-adenosylmethionine (AdoMet) from methionine and ATP. The overall synthetic reaction is composed of two sequential steps, AdoMet formation and the subsequent tripolyphosphate hydrolysis which occurs prior to release of AdoMet from the enzyme. In Mycobacterium bovis (strain BCG / Pasteur 1173P2), this protein is S-adenosylmethionine synthase.